Reading from the N-terminus, the 347-residue chain is Intracellular hyaluronan-binding protein 4 (347 aa).

Disordered stretches follow at residues Gly-39–Thr-221 and Phe-298–Ala-347. Basic and acidic residues-rich tracts occupy residues Val-61–Thr-71, Pro-83–Lys-107, Arg-116–Ala-125, and Asp-146–Ser-174. The span at Glu-199 to Asp-213 shows a compositional bias: acidic residues. The span at Gly-307–Gly-319 shows a compositional bias: gly residues. The segment covering Asp-338 to Ala-347 has biased composition (acidic residues).

This sequence belongs to the SERBP1-HABP4 family. As to quaternary structure, associates with ribosomes; promoting ribosome stabilization. Interacts with eef2/eEF2; promoting ribosome stabilization.

It is found in the nucleus. Its subcellular location is the cytoplasm. It localises to the stress granule. The protein localises to the nucleolus. The protein resides in the nucleus speckle. It is found in the cajal body. Functionally, ribosome-binding protein that promotes ribosome hibernation, a process during which ribosomes are stabilized in an inactive state and preserved from proteasomal degradation. Acts via its association with eef2/eEF2 factor at the A-site of the ribosome, promoting ribosome stabilization in an inactive state compatible with storage. Plays a key role in ribosome hibernation in the mature egg by promoting ribosome stabilization. Ribosomes, which are produced in large quantities during oogenesis, are stored and translationally repressed in the egg and early embryo. The protein is Intracellular hyaluronan-binding protein 4 of Danio rerio (Zebrafish).